The primary structure comprises 255 residues: Proteasome subunit alpha (255 aa).

Positions leucine 228–leucine 255 are disordered. The segment covering proline 232–leucine 255 has biased composition (low complexity).

The protein belongs to the peptidase T1A family. The 20S proteasome core is composed of 14 alpha and 14 beta subunits that assemble into four stacked heptameric rings, resulting in a barrel-shaped structure. The two inner rings, each composed of seven catalytic beta subunits, are sandwiched by two outer rings, each composed of seven alpha subunits. The catalytic chamber with the active sites is on the inside of the barrel. Has a gated structure, the ends of the cylinder being occluded by the N-termini of the alpha-subunits. Is capped by the proteasome-associated ATPase, ARC.

It is found in the cytoplasm. It participates in protein degradation; proteasomal Pup-dependent pathway. The formation of the proteasomal ATPase ARC-20S proteasome complex, likely via the docking of the C-termini of ARC into the intersubunit pockets in the alpha-rings, may trigger opening of the gate for substrate entry. Interconversion between the open-gate and close-gate conformations leads to a dynamic regulation of the 20S proteasome proteolysis activity. Its function is as follows. Component of the proteasome core, a large protease complex with broad specificity involved in protein degradation. This chain is Proteasome subunit alpha, found in Sanguibacter keddieii (strain ATCC 51767 / DSM 10542 / NCFB 3025 / ST-74).